Here is a 477-residue protein sequence, read N- to C-terminus: Probable cytosol aminopeptidase (477 aa).

Lys-245 and Asp-250 together coordinate Mn(2+). Lys-257 is a catalytic residue. Residues Asp-268, Asp-327, and Glu-329 each coordinate Mn(2+). Arg-331 is an active-site residue.

This sequence belongs to the peptidase M17 family. Mn(2+) is required as a cofactor.

The protein localises to the cytoplasm. The catalysed reaction is Release of an N-terminal amino acid, Xaa-|-Yaa-, in which Xaa is preferably Leu, but may be other amino acids including Pro although not Arg or Lys, and Yaa may be Pro. Amino acid amides and methyl esters are also readily hydrolyzed, but rates on arylamides are exceedingly low.. It catalyses the reaction Release of an N-terminal amino acid, preferentially leucine, but not glutamic or aspartic acids.. Functionally, presumably involved in the processing and regular turnover of intracellular proteins. Catalyzes the removal of unsubstituted N-terminal amino acids from various peptides. This Exiguobacterium sibiricum (strain DSM 17290 / CCUG 55495 / CIP 109462 / JCM 13490 / 255-15) protein is Probable cytosol aminopeptidase.